A 200-amino-acid polypeptide reads, in one-letter code: AP-5 complex subunit sigma-1 (200 aa).

As to quaternary structure, probably part of the adaptor protein complex 5 (AP-5) a tetramer composed of AP5B1, AP5M1, AP5S1 and AP5Z1. Interacts with ZFYVE26 and SPG11.

The protein resides in the cytoplasm. The protein localises to the cytosol. It is found in the late endosome membrane. Its subcellular location is the lysosome membrane. As part of AP-5, a probable fifth adaptor protein complex it may be involved in endosomal transport. According to PubMed:20613862, it is required for efficient homologous recombination DNA double-strand break repair. In Homo sapiens (Human), this protein is AP-5 complex subunit sigma-1 (AP5S1).